The following is a 302-amino-acid chain: Methionyl-tRNA formyltransferase (302 aa).

Residue S103–P106 participates in (6S)-5,6,7,8-tetrahydrofolate binding.

It belongs to the Fmt family.

The catalysed reaction is L-methionyl-tRNA(fMet) + (6R)-10-formyltetrahydrofolate = N-formyl-L-methionyl-tRNA(fMet) + (6S)-5,6,7,8-tetrahydrofolate + H(+). Attaches a formyl group to the free amino group of methionyl-tRNA(fMet). The formyl group appears to play a dual role in the initiator identity of N-formylmethionyl-tRNA by promoting its recognition by IF2 and preventing the misappropriation of this tRNA by the elongation apparatus. This chain is Methionyl-tRNA formyltransferase, found in Pseudothermotoga lettingae (strain ATCC BAA-301 / DSM 14385 / NBRC 107922 / TMO) (Thermotoga lettingae).